An 82-amino-acid chain; its full sequence is MDVTLGYLRESLSNHLENEVCQRICKKMLAKRYANEEEFVKDLDDNEMSFLNHVLEKEIKYAQNEQDQKRAKELNEVYELLL.

The sequence is that of Sigma-G-dependent sporulation-specific SASP protein from Bacillus subtilis (strain 168).